Consider the following 590-residue polypeptide: Multidrug resistance-like ATP-binding protein MdlA (590 aa).

In terms of domain architecture, ABC transmembrane type-1 spans 18-303 (YLGAVALLVI…LAWMFNIVER (286 aa)). A run of 6 helical transmembrane segments spans residues 23–43 (ALLVIIAMLQLVPPKVVGIVV), 53–73 (TGQILMWIATMVLIAVVVYLL), 134–154 (GVLTLVDSLVMGCAVLIMMST), 155–175 (QISWQLTLFSLLPMPVMAIMI), 248–268 (IYIAIGMANLLAIGGGSWMVV), and 280–300 (FMMYLGLMIWPMLALAWMFNI). One can recognise an ABC transporter domain in the interval 337–570 (VNIHQFTYPQ…SGWYRDMYRY (234 aa)). An ATP-binding site is contributed by 369 to 376 (GPTGSGKS).

The protein belongs to the ABC transporter superfamily. Drug exporter-2 (TC 3.A.1.117) family.

The protein localises to the cell inner membrane. It catalyses the reaction ATP + H2O + xenobioticSide 1 = ADP + phosphate + xenobioticSide 2.. This Escherichia coli (strain K12) protein is Multidrug resistance-like ATP-binding protein MdlA (mdlA).